Here is a 430-residue protein sequence, read N- to C-terminus: Enolase (430 aa).

Glutamine 164 is a (2R)-2-phosphoglycerate binding site. Glutamate 208 functions as the Proton donor in the catalytic mechanism. Residues aspartate 245, glutamate 288, and aspartate 315 each coordinate Mg(2+). (2R)-2-phosphoglycerate is bound by residues lysine 340, arginine 369, serine 370, and lysine 391. The active-site Proton acceptor is the lysine 340.

The protein belongs to the enolase family. Mg(2+) is required as a cofactor.

The protein resides in the cytoplasm. The protein localises to the secreted. Its subcellular location is the cell surface. The catalysed reaction is (2R)-2-phosphoglycerate = phosphoenolpyruvate + H2O. The protein operates within carbohydrate degradation; glycolysis; pyruvate from D-glyceraldehyde 3-phosphate: step 4/5. Catalyzes the reversible conversion of 2-phosphoglycerate (2-PG) into phosphoenolpyruvate (PEP). It is essential for the degradation of carbohydrates via glycolysis. The chain is Enolase from Thermococcus kodakarensis (strain ATCC BAA-918 / JCM 12380 / KOD1) (Pyrococcus kodakaraensis (strain KOD1)).